The primary structure comprises 323 residues: Probable cell division protein WhiA (323 aa).

The segment at residues 275 to 309 (TLKELGEMLTTGQVSKSGINHRLRKLDQIAERLRS) is a DNA-binding region (H-T-H motif).

The protein belongs to the WhiA family.

Functionally, involved in cell division and chromosome segregation. The sequence is that of Probable cell division protein WhiA from Listeria innocua serovar 6a (strain ATCC BAA-680 / CLIP 11262).